Consider the following 279-residue polypeptide: Zinc-finger homeodomain protein 1 (279 aa).

The span at 1 to 30 (MEFEDNNNNNDEEQEEDMNLHEEEEDDDAV) shows a compositional bias: acidic residues. A disordered region spans residues 1–62 (MEFEDNNNNN…TTSTGGGGGF (62 aa)). The ZF-HD dimerization-type zinc finger occupies 75 to 124 (FRECLKNQAVNIGGHAVDGCGEFMPAGIEGTIDALKCAACGCHRNFHRKE). 2 disordered regions span residues 128 to 199 (FHHA…TKFT) and 245 to 279 (NNKH…QDQP). Pro residues predominate over residues 134–143 (QHQPPPPPPG). A DNA-binding region (homeobox; atypical) is located at residues 191–254 (RKRHRTKFTA…NNKHTLGKSP (64 aa)).

In terms of assembly, homo- and heterodimer with other ZFHD proteins. Interacts with MIF1 and MIF2; these interactions prevent nuclear localization and DNA-binding to inhibit transcription regulation activity. Binds to ZHD2, ZHD3, ZHD4, ZHD5, ZHD6, ZHD7, ZHD8, ZHD9, ZHD10 and ZHD11. In terms of tissue distribution, mostly expressed in flowers and inflorescence.

The protein resides in the nucleus. In terms of biological role, putative transcription factor. In Arabidopsis thaliana (Mouse-ear cress), this protein is Zinc-finger homeodomain protein 1 (ZHD1).